A 565-amino-acid polypeptide reads, in one-letter code: Arginine--tRNA ligase (565 aa).

The 'HIGH' region signature appears at 128-138 (ANPTGPLHVGH).

This sequence belongs to the class-I aminoacyl-tRNA synthetase family. Monomer.

Its subcellular location is the cytoplasm. The catalysed reaction is tRNA(Arg) + L-arginine + ATP = L-arginyl-tRNA(Arg) + AMP + diphosphate. This Albidiferax ferrireducens (strain ATCC BAA-621 / DSM 15236 / T118) (Rhodoferax ferrireducens) protein is Arginine--tRNA ligase.